Reading from the N-terminus, the 291-residue chain is Small ribosomal subunit protein uS2 (291 aa).

Belongs to the universal ribosomal protein uS2 family.

The chain is Small ribosomal subunit protein uS2 from Lawsonia intracellularis (strain PHE/MN1-00).